Reading from the N-terminus, the 673-residue chain is Methionine--tRNA ligase (673 aa).

A 'HIGH' region motif is present at residues 13–23 (PYTNGFCHLGH). Cys144, Cys147, Cys156, and Cys160 together coordinate Zn(2+). Positions 325 to 329 (KFSKS) match the 'KMSKS' region motif. Lys328 lines the ATP pocket. The region spanning 575–673 (DVAKLDLRVG…KDVPEGTKVH (99 aa)) is the tRNA-binding domain.

It belongs to the class-I aminoacyl-tRNA synthetase family. MetG type 1 subfamily. Homodimer. It depends on Zn(2+) as a cofactor.

The protein localises to the cytoplasm. It catalyses the reaction tRNA(Met) + L-methionine + ATP = L-methionyl-tRNA(Met) + AMP + diphosphate. Functionally, is required not only for elongation of protein synthesis but also for the initiation of all mRNA translation through initiator tRNA(fMet) aminoacylation. This is Methionine--tRNA ligase from Methanocorpusculum labreanum (strain ATCC 43576 / DSM 4855 / Z).